The following is a 227-amino-acid chain: 7-cyano-7-deazaguanine synthase (227 aa).

8-18 (LSGGTDSATVL) serves as a coordination point for ATP. Zn(2+)-binding residues include C192, C202, C205, and C208.

It belongs to the QueC family. Requires Zn(2+) as cofactor.

It catalyses the reaction 7-carboxy-7-deazaguanine + NH4(+) + ATP = 7-cyano-7-deazaguanine + ADP + phosphate + H2O + H(+). It participates in purine metabolism; 7-cyano-7-deazaguanine biosynthesis. Catalyzes the ATP-dependent conversion of 7-carboxy-7-deazaguanine (CDG) to 7-cyano-7-deazaguanine (preQ(0)). The sequence is that of 7-cyano-7-deazaguanine synthase from Rickettsia prowazekii (strain Madrid E).